We begin with the raw amino-acid sequence, 414 residues long: Cyclic di-GMP phosphodiesterase PA4108 (414 aa).

The HD-GYP domain occupies 133-330; the sequence is ISASVLRHPN…YPVGALVRLE (198 aa). A divalent metal cation is bound by residues histidine 160, histidine 192, aspartate 193, histidine 221, histidine 246, and histidine 247.

As to quaternary structure, monomer.

It carries out the reaction 3',3'-c-di-GMP + 2 H2O = 2 GMP + 2 H(+). With respect to regulation, activated by Mg(2+) and Mn(2+). Its function is as follows. Phosphodiesterase (PDE) that catalyzes the hydrolysis of cyclic diguanylate (c-di-GMP) to GMP. Hydrolyzes c-di-GMP to GMP in a two-step reaction, via the linear intermediate 5'-phosphoguanylyl(3'-&gt;5')guanosine (pGpG). In vitro, can use pGpG as an alternative substrate and hydrolyze it into GMP. Acts in regulation of motility, synthesis of virulence determinants and biofilm architecture. The polypeptide is Cyclic di-GMP phosphodiesterase PA4108 (Pseudomonas aeruginosa (strain ATCC 15692 / DSM 22644 / CIP 104116 / JCM 14847 / LMG 12228 / 1C / PRS 101 / PAO1)).